Here is a 102-residue protein sequence, read N- to C-terminus: Large ribosomal subunit protein bL21 (102 aa).

It belongs to the bacterial ribosomal protein bL21 family. As to quaternary structure, part of the 50S ribosomal subunit. Contacts protein L20.

In terms of biological role, this protein binds to 23S rRNA in the presence of protein L20. This is Large ribosomal subunit protein bL21 from Agathobacter rectalis (strain ATCC 33656 / DSM 3377 / JCM 17463 / KCTC 5835 / VPI 0990) (Eubacterium rectale).